A 956-amino-acid chain; its full sequence is MAM domain-containing glycosylphosphatidylinositol anchor protein 1 (956 aa).

A signal peptide spans 1 to 18 (MEVTCLLLLALIPFHCRG). 2 consecutive Ig-like domains span residues 24-123 (PAQA…KSIR) and 132-230 (PVLT…KAIT). Asn42 carries N-linked (GlcNAc...) asparagine glycosylation. Cystine bridges form between Cys60–Cys108 and Cys157–Cys214. N-linked (GlcNAc...) asparagine glycans are attached at residues Asn235, Asn247, Asn257, and Asn307. Ig-like domains are found at residues 240-323 (PALK…KTVN), 338-432 (PDMI…IEVN), 440-532 (PTIS…AQVQ), and 539-650 (PEVE…PTRS). 2 disulfide bridges follow: Cys262/Cys308 and Cys357/Cys415. Asn432 carries N-linked (GlcNAc...) asparagine glycosylation. Disulfide bonds link Cys463–Cys514 and Cys560–Cys616. The 118-residue stretch at 627–744 (CLFQVSAKAY…SRIIHYTEPI (118 aa)) folds into the Fibronectin type-III domain. Residues 752 to 919 (NTCHFEDEKI…VTLKKGECPR (168 aa)) form the MAM domain. Positions 780-789 (LTQNPKRSPN) are enriched in polar residues. Residues 780-799 (LTQNPKRSPNTGPPTDISGT) form a disordered region. A lipid anchor (GPI-anchor amidated serine) is attached at Ser933. The propeptide at 934–956 (GAPRLSSLQLWGSMAIFLLALQR) is removed in mature form.

Interacts heterophilically through its MAM domain with proteins in axon-rich regions and through its Ig-like domains with proteins in differentiating muscle. Interacts (through the Ig-like domains) with NLGN2. As to expression, expressed by neurons in layers 2 and 3 of the cortex during their migration and settling in the cortical plate. Also found in layers 4 and 6a. From 9.5 dpc-13.5 dpc, detected in the marginal zone of the developing cortex. At 16.5 dpc, modest expression is found in the intermediate zone. At postnatal day 1, evident in the superficial cortical plate. By postnatal day 7, expression is limited to layers 2 and 3 throughout most of the cortex.

Its subcellular location is the cell membrane. In terms of biological role, required for radial migration of cortical neurons in the superficial layer of the neocortex. Plays a role in the formation or maintenance of inhibitory synapses. May function by inhibiting the activity of NLGN2. This Mus musculus (Mouse) protein is MAM domain-containing glycosylphosphatidylinositol anchor protein 1.